A 337-amino-acid chain; its full sequence is UDP-3-O-acylglucosamine N-acyltransferase (337 aa).

The active-site Proton acceptor is histidine 238.

The protein belongs to the transferase hexapeptide repeat family. LpxD subfamily. In terms of assembly, homotrimer.

The catalysed reaction is a UDP-3-O-[(3R)-3-hydroxyacyl]-alpha-D-glucosamine + a (3R)-hydroxyacyl-[ACP] = a UDP-2-N,3-O-bis[(3R)-3-hydroxyacyl]-alpha-D-glucosamine + holo-[ACP] + H(+). The protein operates within bacterial outer membrane biogenesis; LPS lipid A biosynthesis. In terms of biological role, catalyzes the N-acylation of UDP-3-O-acylglucosamine using 3-hydroxyacyl-ACP as the acyl donor. Is involved in the biosynthesis of lipid A, a phosphorylated glycolipid that anchors the lipopolysaccharide to the outer membrane of the cell. This is UDP-3-O-acylglucosamine N-acyltransferase from Xanthomonas axonopodis pv. citri (strain 306).